Reading from the N-terminus, the 140-residue chain is MTIQYTFSMIKPDAIKRNKIGQVNTYLENEGLKIVAQKMTTLTKYEAECFYDEHRARPFFDSLVEYITSGPVVLQVLKGMDAITLNRKVMGATNPAEAEAGTIRKDIGESIEANSIHGSDSENSAKREIKFFFKKSEIIE.

Positions 11, 59, 87, 93, 104, and 114 each coordinate ATP. The Pros-phosphohistidine intermediate role is filled by His-117.

This sequence belongs to the NDK family. As to quaternary structure, homotetramer. It depends on Mg(2+) as a cofactor.

Its subcellular location is the cytoplasm. The enzyme catalyses a 2'-deoxyribonucleoside 5'-diphosphate + ATP = a 2'-deoxyribonucleoside 5'-triphosphate + ADP. It catalyses the reaction a ribonucleoside 5'-diphosphate + ATP = a ribonucleoside 5'-triphosphate + ADP. Its function is as follows. Major role in the synthesis of nucleoside triphosphates other than ATP. The ATP gamma phosphate is transferred to the NDP beta phosphate via a ping-pong mechanism, using a phosphorylated active-site intermediate. The chain is Nucleoside diphosphate kinase from Rickettsia bellii (strain OSU 85-389).